A 175-amino-acid polypeptide reads, in one-letter code: Transcriptional repressor NrdR (175 aa).

The segment at Cys-3 to Cys-32 is a zinc-finger region. Residues Leu-47–Gln-137 enclose the ATP-cone domain.

Belongs to the NrdR family. The cofactor is Zn(2+).

Functionally, negatively regulates transcription of bacterial ribonucleotide reductase nrd genes and operons by binding to NrdR-boxes. This is Transcriptional repressor NrdR from Dehalococcoides mccartyi (strain ATCC BAA-2100 / JCM 16839 / KCTC 5957 / BAV1).